A 257-amino-acid polypeptide reads, in one-letter code: MRFDVVTLFPDMFGLVRDQGVTGRAHAQGLWALHAWNPRDFTQDVHRTVDDRPYGGGPGMVMMAAPLEAAVAAAQAARAAQGLQAAPVILLSPAGRRYDQAEATTLAAGTGAIFICGRYEGVDQRFIERCVTHELSLGDFVLSGGELAALAMMDAAVRLLPGVLNDGDSALQDSFNAALDGLLDSPHYTRPEVYEGVPVPQPLLSGHHANIARWRREQSLRLTASRRPELIERARGEGRLSKADERFLAGLAGERKS.

S-adenosyl-L-methionine is bound by residues Gly-117 and 137–142; that span reads LGDFVL.

This sequence belongs to the RNA methyltransferase TrmD family. In terms of assembly, homodimer.

The protein localises to the cytoplasm. The catalysed reaction is guanosine(37) in tRNA + S-adenosyl-L-methionine = N(1)-methylguanosine(37) in tRNA + S-adenosyl-L-homocysteine + H(+). In terms of biological role, specifically methylates guanosine-37 in various tRNAs. The polypeptide is tRNA (guanine-N(1)-)-methyltransferase (Bordetella parapertussis (strain 12822 / ATCC BAA-587 / NCTC 13253)).